The chain runs to 330 residues: 2-keto-3-deoxygluconate permease (330 aa).

10 helical membrane passes run 10–30, 42–62, 77–97, 100–120, 140–160, 163–183, 200–220, 224–244, 254–274, and 289–309; these read VPGG…TFAP, ALIT…GATI, LLLG…QFIP, GIQS…VMNE, GAFA…TFGV, LAAF…LGCI, PAII…GMLI, LLGI…LFLL, VAGV…YALA, and AIIA…TVWV.

This sequence belongs to the KdgT transporter family.

It is found in the cell membrane. It carries out the reaction 2-dehydro-3-deoxy-D-gluconate(in) + H(+)(in) = 2-dehydro-3-deoxy-D-gluconate(out) + H(+)(out). Catalyzes the proton-dependent uptake of 2-keto-3-deoxygluconate (KDG) into the cell. This is 2-keto-3-deoxygluconate permease from Bacillus subtilis (strain 168).